A 35-amino-acid chain; its full sequence is Photosystem II reaction center protein Psb30 (35 aa).

The helical transmembrane segment at 7–27 threads the bilayer; sequence LIANFAALALITLAGPAVIFI.

Belongs to the Psb30/Ycf12 family. In terms of assembly, PSII is composed of 1 copy each of membrane proteins PsbA, PsbB, PsbC, PsbD, PsbE, PsbF, PsbH, PsbI, PsbJ, PsbK, PsbL, PsbM, PsbT, PsbX, PsbY, PsbZ, Psb30/Ycf12, peripheral proteins of the oxygen-evolving complex and a large number of cofactors. It forms dimeric complexes.

Its subcellular location is the plastid. The protein resides in the organellar chromatophore thylakoid membrane. In terms of biological role, a core subunit of photosystem II (PSII), probably helps stabilize the reaction center. This Paulinella chromatophora protein is Photosystem II reaction center protein Psb30.